The primary structure comprises 469 residues: Glutamate--tRNA ligase 1 (469 aa).

The 'HIGH' region motif lies at 10–20 (PSPTGYLHIGG). Zn(2+)-binding residues include Cys99, Cys101, Cys126, and Asp128. The short motif at 237 to 241 (RLSKR) is the 'KMSKS' region element. Residue Lys240 coordinates ATP.

It belongs to the class-I aminoacyl-tRNA synthetase family. Glutamate--tRNA ligase type 1 subfamily. In terms of assembly, monomer. Zn(2+) serves as cofactor.

Its subcellular location is the cytoplasm. The enzyme catalyses tRNA(Glu) + L-glutamate + ATP = L-glutamyl-tRNA(Glu) + AMP + diphosphate. Catalyzes the attachment of glutamate to tRNA(Glu) in a two-step reaction: glutamate is first activated by ATP to form Glu-AMP and then transferred to the acceptor end of tRNA(Glu). In Coxiella burnetii (strain RSA 331 / Henzerling II), this protein is Glutamate--tRNA ligase 1.